Reading from the N-terminus, the 259-residue chain is 5'-nucleotidase SurE (259 aa).

Residues Asp15, Asp16, Ser46, and Asn102 each contribute to the a divalent metal cation site.

It belongs to the SurE nucleotidase family. It depends on a divalent metal cation as a cofactor.

It localises to the cytoplasm. The catalysed reaction is a ribonucleoside 5'-phosphate + H2O = a ribonucleoside + phosphate. In terms of biological role, nucleotidase that shows phosphatase activity on nucleoside 5'-monophosphates. The polypeptide is 5'-nucleotidase SurE (Chlorobium luteolum (strain DSM 273 / BCRC 81028 / 2530) (Pelodictyon luteolum)).